Consider the following 179-residue polypeptide: PP2C-like domain-containing protein R307 (179 aa).

The region spanning 1–176 is the PPM-type phosphatase domain; that stretch reads MNESKRENIQ…DNVSVIIIFF (176 aa).

It is found in the virion. The polypeptide is PP2C-like domain-containing protein R307 (Acanthamoeba polyphaga mimivirus (APMV)).